The sequence spans 293 residues: MNPFWSMSTSSVRKRSEGEEKTLTGDVKTSPPRTAPKKQLPSIPKNALPITKPTSPAPAAQSTNGTHASYGPFYLEYSLLAEFTLVVKQKLPGVYVQPSYRSALMWFGVIFIRHGLYQDGVFKFTVYIPDNYPDGDCPRLVFDIPVFHPLVDPTSGELDVKRAFAKWRRNHNHIWQVLMYARRVFYKIDTASPLNPEAAVLYEKDIQLFKSKVVDSVQVCTARLFDQPKIEDPYAISFSPWNPSVHDEAREKMLTQKKKPEEQHNKSVHVAGLSWVKPGSVQPFSKEEKTVAT.

A compositionally biased stretch (polar residues) spans 1 to 11 (MNPFWSMSTSS). Positions 1-63 (MNPFWSMSTS…TSPAPAAQST (63 aa)) are disordered. Over residues 14-23 (KRSEGEEKTL) the composition is skewed to basic and acidic residues. Ser-30 carries the phosphoserine modification. In terms of domain architecture, UBC core spans 74 to 222 (YLEYSLLAEF…VVDSVQVCTA (149 aa)). Over residues 253–265 (MLTQKKKPEEQHN) the composition is skewed to basic and acidic residues. A disordered region spans residues 253-293 (MLTQKKKPEEQHNKSVHVAGLSWVKPGSVQPFSKEEKTVAT).

Belongs to the ubiquitin-conjugating enzyme family. FTS subfamily. Component of the FTS/Hook/FHIP complex (FHF complex), composed of AKTIP/FTS, FHIP1B, and one or more members of the Hook family of proteins HOOK1, HOOK2, and HOOK3. Interacts directly with HOOK1, HOOK2 and HOOK3. The FHF complex associates with the homotypic vesicular sorting complex (the HOPS complex). Also interacts with AKT1. May interact with FHIP1A.

It localises to the cytoplasm. The protein localises to the cell membrane. In terms of biological role, component of the FTS/Hook/FHIP complex (FHF complex). The FHF complex may function to promote vesicle trafficking and/or fusion via the homotypic vesicular protein sorting complex (the HOPS complex). Regulates apoptosis by enhancing phosphorylation and activation of AKT1. Increases release of TNFSF6 via the AKT1/GSK3B/NFATC1 signaling cascade. FHF complex promotes the distribution of AP-4 complex to the perinuclear area of the cell. This is AKT-interacting protein (AKTIP) from Pongo abelii (Sumatran orangutan).